The primary structure comprises 247 residues: Ribose-5-phosphate isomerase (247 aa).

It belongs to the ribose 5-phosphate isomerase family.

The protein localises to the cytoplasm. The enzyme catalyses aldehydo-D-ribose 5-phosphate = D-ribulose 5-phosphate. The protein operates within carbohydrate degradation; pentose phosphate pathway; D-ribose 5-phosphate from D-ribulose 5-phosphate (non-oxidative stage): step 1/1. This chain is Ribose-5-phosphate isomerase (RKI1), found in Meyerozyma guilliermondii (strain ATCC 6260 / CBS 566 / DSM 6381 / JCM 1539 / NBRC 10279 / NRRL Y-324) (Yeast).